We begin with the raw amino-acid sequence, 420 residues long: 3-isopropylmalate dehydratase large subunit (420 aa).

3 residues coordinate [4Fe-4S] cluster: Cys300, Cys360, and Cys363.

Belongs to the aconitase/IPM isomerase family. LeuC type 2 subfamily. Heterodimer of LeuC and LeuD. The cofactor is [4Fe-4S] cluster.

The catalysed reaction is (2R,3S)-3-isopropylmalate = (2S)-2-isopropylmalate. The protein operates within amino-acid biosynthesis; L-leucine biosynthesis; L-leucine from 3-methyl-2-oxobutanoate: step 2/4. In terms of biological role, catalyzes the isomerization between 2-isopropylmalate and 3-isopropylmalate, via the formation of 2-isopropylmaleate. The chain is 3-isopropylmalate dehydratase large subunit from Heliobacterium modesticaldum (strain ATCC 51547 / Ice1).